The following is a 591-amino-acid chain: Aspartate--tRNA(Asp/Asn) ligase (591 aa).

Position 175 (E175) interacts with L-aspartate. Residues 199–202 are aspartate; it reads QQYK. Residues R221 and H450 each contribute to the L-aspartate site. Position 221–223 (221–223) interacts with ATP; sequence RDE. E484 is a binding site for ATP. L-aspartate is bound at residue R491. 536–539 provides a ligand contact to ATP; the sequence is GVDR.

It belongs to the class-II aminoacyl-tRNA synthetase family. Type 1 subfamily. As to quaternary structure, homodimer.

The protein resides in the cytoplasm. It catalyses the reaction tRNA(Asx) + L-aspartate + ATP = L-aspartyl-tRNA(Asx) + AMP + diphosphate. In terms of biological role, aspartyl-tRNA synthetase with relaxed tRNA specificity since it is able to aspartylate not only its cognate tRNA(Asp) but also tRNA(Asn). Reaction proceeds in two steps: L-aspartate is first activated by ATP to form Asp-AMP and then transferred to the acceptor end of tRNA(Asp/Asn). The polypeptide is Aspartate--tRNA(Asp/Asn) ligase (Rhodopseudomonas palustris (strain ATCC BAA-98 / CGA009)).